Consider the following 387-residue polypeptide: Queuine tRNA-ribosyltransferase (387 aa).

The Proton acceptor role is filled by aspartate 102. Substrate is bound by residues 102–106 (DSGGF), aspartate 156, glutamine 205, and glycine 232. Residues 263–269 (GVGTPED) form an RNA binding region. The active-site Nucleophile is aspartate 282. Residues 287–291 (TRNAR) form an RNA binding; important for wobble base 34 recognition region. Cysteine 320, cysteine 322, cysteine 325, and histidine 351 together coordinate Zn(2+).

It belongs to the queuine tRNA-ribosyltransferase family. Homodimer. Within each dimer, one monomer is responsible for RNA recognition and catalysis, while the other monomer binds to the replacement base PreQ1. Requires Zn(2+) as cofactor.

The catalysed reaction is 7-aminomethyl-7-carbaguanine + guanosine(34) in tRNA = 7-aminomethyl-7-carbaguanosine(34) in tRNA + guanine. It participates in tRNA modification; tRNA-queuosine biosynthesis. Catalyzes the base-exchange of a guanine (G) residue with the queuine precursor 7-aminomethyl-7-deazaguanine (PreQ1) at position 34 (anticodon wobble position) in tRNAs with GU(N) anticodons (tRNA-Asp, -Asn, -His and -Tyr). Catalysis occurs through a double-displacement mechanism. The nucleophile active site attacks the C1' of nucleotide 34 to detach the guanine base from the RNA, forming a covalent enzyme-RNA intermediate. The proton acceptor active site deprotonates the incoming PreQ1, allowing a nucleophilic attack on the C1' of the ribose to form the product. After dissociation, two additional enzymatic reactions on the tRNA convert PreQ1 to queuine (Q), resulting in the hypermodified nucleoside queuosine (7-(((4,5-cis-dihydroxy-2-cyclopenten-1-yl)amino)methyl)-7-deazaguanosine). This is Queuine tRNA-ribosyltransferase from Polaromonas naphthalenivorans (strain CJ2).